A 621-amino-acid polypeptide reads, in one-letter code: 1-deoxy-D-xylulose-5-phosphate synthase (621 aa).

Thiamine diphosphate-binding positions include His-80 and 121 to 123 (GHS). Position 152 (Asp-152) interacts with Mg(2+). Thiamine diphosphate-binding positions include 153-154 (GA), Asn-181, Tyr-288, and Glu-371. Asn-181 serves as a coordination point for Mg(2+).

Belongs to the transketolase family. DXPS subfamily. In terms of assembly, homodimer. Mg(2+) is required as a cofactor. It depends on thiamine diphosphate as a cofactor.

The enzyme catalyses D-glyceraldehyde 3-phosphate + pyruvate + H(+) = 1-deoxy-D-xylulose 5-phosphate + CO2. It functions in the pathway metabolic intermediate biosynthesis; 1-deoxy-D-xylulose 5-phosphate biosynthesis; 1-deoxy-D-xylulose 5-phosphate from D-glyceraldehyde 3-phosphate and pyruvate: step 1/1. Catalyzes the acyloin condensation reaction between C atoms 2 and 3 of pyruvate and glyceraldehyde 3-phosphate to yield 1-deoxy-D-xylulose-5-phosphate (DXP). This chain is 1-deoxy-D-xylulose-5-phosphate synthase, found in Pectobacterium atrosepticum (strain SCRI 1043 / ATCC BAA-672) (Erwinia carotovora subsp. atroseptica).